Consider the following 473-residue polypeptide: Vasculin (473 aa).

Disordered stretches follow at residues 1–26 (MAQHDFAPAWLNFPTPPSSTKSSLNF), 44–163 (RRRH…EYPP), 196–240 (SQPV…SFPH), 258–286 (NFSPSTTSVKECNRSNSSSPVDKLNQQPR), and 305–342 (LKRDRVEEEHEDESHVGSEKDDDSFNLHNSNSTHQERD). Ser-49 is subject to Phosphoserine. Arg-87 carries the post-translational modification Omega-N-methylarginine. Over residues 93-107 (GSSRSRSSIFHSGKS) the composition is skewed to low complexity. Over residues 119–133 (ETGRKDDKRERKQFE) the composition is skewed to basic and acidic residues. Phosphoserine is present on residues Ser-274, Ser-276, Ser-322, and Ser-381. Over residues 305 to 329 (LKRDRVEEEHEDESHVGSEKDDDSF) the composition is skewed to basic and acidic residues. Residues 444 to 473 (GPWKNSTFKPTIENDDTETSSSDTSDDDDV) form a disordered region. Acidic residues predominate over residues 456 to 473 (ENDDTETSSSDTSDDDDV).

Belongs to the vasculin family. Interacts with GTF2B, GTF2F2, RNA polymerase II and TBP.

The protein resides in the nucleus. In terms of biological role, functions as a GC-rich promoter-specific transactivating transcription factor. The chain is Vasculin (GPBP1) from Bos taurus (Bovine).